The sequence spans 696 residues: DNA-directed RNA polymerase subunit beta' (696 aa).

Zn(2+) contacts are provided by Cys70, Cys72, Cys85, and Cys88. Mg(2+) contacts are provided by Asp540, Asp542, and Asp544.

It belongs to the RNA polymerase beta' chain family. RpoC1 subfamily. As to quaternary structure, in plastids the minimal PEP RNA polymerase catalytic core is composed of four subunits: alpha, beta, beta', and beta''. When a (nuclear-encoded) sigma factor is associated with the core the holoenzyme is formed, which can initiate transcription. It depends on Mg(2+) as a cofactor. Zn(2+) serves as cofactor.

The protein resides in the plastid. It is found in the chloroplast. The catalysed reaction is RNA(n) + a ribonucleoside 5'-triphosphate = RNA(n+1) + diphosphate. Functionally, DNA-dependent RNA polymerase catalyzes the transcription of DNA into RNA using the four ribonucleoside triphosphates as substrates. The protein is DNA-directed RNA polymerase subunit beta' of Phaeodactylum tricornutum (strain CCAP 1055/1).